We begin with the raw amino-acid sequence, 476 residues long: Ribulose bisphosphate carboxylase large chain (476 aa).

Residues Asn124 and Thr174 each contribute to the substrate site. Catalysis depends on Lys176, which acts as the Proton acceptor. Lys178 contacts substrate. Positions 202, 204, and 205 each coordinate Mg(2+). Lys202 carries the N6-carboxylysine modification. His295 functions as the Proton acceptor in the catalytic mechanism. Residues Arg296, His328, and Ser380 each contribute to the substrate site.

It belongs to the RuBisCO large chain family. Type I subfamily. Heterohexadecamer of 8 large chains and 8 small chains; disulfide-linked. The disulfide link is formed within the large subunit homodimers. The cofactor is Mg(2+). The disulfide bond which can form in the large chain dimeric partners within the hexadecamer appears to be associated with oxidative stress and protein turnover.

The protein localises to the carboxysome. The catalysed reaction is 2 (2R)-3-phosphoglycerate + 2 H(+) = D-ribulose 1,5-bisphosphate + CO2 + H2O. The enzyme catalyses D-ribulose 1,5-bisphosphate + O2 = 2-phosphoglycolate + (2R)-3-phosphoglycerate + 2 H(+). In terms of biological role, ruBisCO catalyzes two reactions: the carboxylation of D-ribulose 1,5-bisphosphate, the primary event in carbon dioxide fixation, as well as the oxidative fragmentation of the pentose substrate in the photorespiration process. Both reactions occur simultaneously and in competition at the same active site. The polypeptide is Ribulose bisphosphate carboxylase large chain (Nostoc punctiforme (strain ATCC 29133 / PCC 73102)).